The primary structure comprises 234 residues: Sugar fermentation stimulation protein A (234 aa).

Residues 201–220 (LLSEAQNKGVEVLAYKAELS) constitute a DNA-binding region (H-T-H motif).

This sequence belongs to the SfsA family.

In terms of biological role, binds to DNA non-specifically. Could be a regulatory factor involved in maltose metabolism. In Salmonella choleraesuis (strain SC-B67), this protein is Sugar fermentation stimulation protein A.